Consider the following 135-residue polypeptide: Small ribosomal subunit protein bS6 (135 aa).

The span at 99–120 shows a compositional bias: polar residues; sequence QHSSLGRSTAPANPMASNTPRT. A disordered region spans residues 99–135; it reads QHSSLGRSTAPANPMASNTPRTEGQEQAKTEPQTAPA.

The protein belongs to the bacterial ribosomal protein bS6 family.

Its function is as follows. Binds together with bS18 to 16S ribosomal RNA. The polypeptide is Small ribosomal subunit protein bS6 (Synechococcus sp. (strain RCC307)).